We begin with the raw amino-acid sequence, 278 residues long: UPF0758 protein BURPS668_0979 (278 aa).

Residues 1-64 (MQYEIVSAGE…ATAAARRGRD (64 aa)) are disordered. Positions 22–59 (AAAPAAPSSAVPSSAALSSAALSSAARPTGAPPATAAA) are enriched in low complexity. The 123-residue stretch at 156-278 (LVDSPGAVDD…TFSFAQAGWI (123 aa)) folds into the MPN domain. Zn(2+) is bound by residues His227, His229, and Asp240. A JAMM motif motif is present at residues 227 to 240 (HNHPSGAVRPSAAD).

The protein belongs to the UPF0758 family.

This is UPF0758 protein BURPS668_0979 from Burkholderia pseudomallei (strain 668).